Reading from the N-terminus, the 311-residue chain is Ribosomal RNA small subunit methyltransferase H (311 aa).

S-adenosyl-L-methionine is bound by residues 32–34 (GGH), D52, F78, D99, and Q106.

The protein belongs to the methyltransferase superfamily. RsmH family.

It localises to the cytoplasm. The catalysed reaction is cytidine(1402) in 16S rRNA + S-adenosyl-L-methionine = N(4)-methylcytidine(1402) in 16S rRNA + S-adenosyl-L-homocysteine + H(+). Its function is as follows. Specifically methylates the N4 position of cytidine in position 1402 (C1402) of 16S rRNA. This chain is Ribosomal RNA small subunit methyltransferase H, found in Halothermothrix orenii (strain H 168 / OCM 544 / DSM 9562).